The primary structure comprises 229 residues: Ras-related protein Rab-33B (229 aa).

GTP-binding residues include asparagine 43, valine 44, glycine 45, lysine 46, threonine 47, cysteine 48, threonine 62, and threonine 65. Threonine 47 is a binding site for Mg(2+). The short motif at 56–68 is the Switch 1 element; it reads GRFPDRTEATIGV. Positions 65 and 88 each coordinate Mg(2+). The Switch 2 motif lies at 89-108; the sequence is TAGQERFRKSMVQHYYRNVH. Residues glycine 91, asparagine 148, lysine 149, aspartate 151, alanine 179, and lysine 180 each coordinate GTP. S-geranylgeranyl cysteine attachment occurs at residues cysteine 227 and cysteine 229. Cysteine 229 is subject to Cysteine methyl ester.

It belongs to the small GTPase superfamily. Rab family. Interacts (GTP- and GDP-bound forms) with ATG16L1; the complex consists of a tetramer where two RAB33B molecules bind independently one molecule of the ATG16L1 homodimer; the interaction promotes ATG12-ATG5-ATG16L1 complex recruitment to phagophores. Interacts with ATG16L2; however interaction is approximately hundred times lower than for ATG16L1. Interacts with RIC1 (via C-terminus domain); the interaction is direct with a preference for RAB33B-GTP. Interacts with RGP1. Mg(2+) is required as a cofactor. Prenylated. As to expression, ubiquitous.

Its subcellular location is the golgi apparatus membrane. The protein localises to the golgi apparatus. It is found in the cis-Golgi network. It localises to the preautophagosomal structure membrane. It carries out the reaction GTP + H2O = GDP + phosphate + H(+). Regulated by guanine nucleotide exchange factors (GEFs) which promote the exchange of bound GDP for free GTP. Regulated by GTPase activating proteins (GAPs) such as SGSM2 which increase the GTP hydrolysis activity. Inhibited by GDP dissociation inhibitors (GDIs). The small GTPases Rab are key regulators of intracellular membrane trafficking, from the formation of transport vesicles to their fusion with membranes. Rabs cycle between an inactive GDP-bound form and an active GTP-bound form that is able to recruit to membranes different sets of downstream effectors directly responsible for vesicle formation, movement, tethering and fusion. RAB33B acts, in coordination with RAB6A, to regulate intra-Golgi retrograde trafficking. Participates in autophagosome formation by recruiting the ATG12-ATG5-ATG16L1 complex to phagophores, probably in a nucleotide-independent manner. The protein is Ras-related protein Rab-33B of Mus musculus (Mouse).